The primary structure comprises 374 residues: Protein RecA (374 aa).

Residue 66–73 participates in ATP binding; the sequence is GPESSGKT. Positions 327–374 are disordered; the sequence is LGVGVHPEESATEPGADAASAAPADAAPAVPAPTTAKATKSKAAAAKS. The span at 338–374 shows a compositional bias: low complexity; that stretch reads TEPGADAASAAPADAAPAVPAPTTAKATKSKAAAAKS.

The protein belongs to the RecA family.

It localises to the cytoplasm. Functionally, can catalyze the hydrolysis of ATP in the presence of single-stranded DNA, the ATP-dependent uptake of single-stranded DNA by duplex DNA, and the ATP-dependent hybridization of homologous single-stranded DNAs. It interacts with LexA causing its activation and leading to its autocatalytic cleavage. The polypeptide is Protein RecA (Streptomyces lividans).